Here is a 262-residue protein sequence, read N- to C-terminus: Small ribosomal subunit protein eS1 (262 aa).

This sequence belongs to the eukaryotic ribosomal protein eS1 family. Component of the small ribosomal subunit. Mature ribosomes consist of a small (40S) and a large (60S) subunit. The 40S subunit contains about 33 different proteins and 1 molecule of RNA (18S). The 60S subunit contains about 49 different proteins and 3 molecules of RNA (25S, 5.8S and 5S).

The protein resides in the cytoplasm. The sequence is that of Small ribosomal subunit protein eS1 from Brassica campestris (Field mustard).